Consider the following 164-residue polypeptide: Interferon gamma (164 aa).

Positions 1–19 are cleaved as a signal peptide; that stretch reads MTCQTYNLFVLSVIMIYYG. 2 N-linked (GlcNAc...) asparagine glycosylation sites follow: asparagine 42 and asparagine 61.

The protein belongs to the type II (or gamma) interferon family. Homodimer.

The protein resides in the secreted. Its function is as follows. Produced by lymphocytes activated by specific antigens or mitogens. IFN-gamma, in addition to having antiviral activity, has important immunoregulatory functions. It is a potent activator of macrophages, it has antiproliferative effects on transformed cells and it can potentiate the antiviral and antitumor effects of the type I interferons. The sequence is that of Interferon gamma (IFNG) from Meleagris gallopavo (Wild turkey).